The sequence spans 144 residues: Large ribosomal subunit protein uL15 (144 aa).

The segment at 1-57 (MELNNLKPAEGSKHAKRRVGRGIGSGLGKTAGRGHKGQKSRSGGFHKVGFEGGQMPL) is disordered. The span at 21 to 31 (RGIGSGLGKTA) shows a compositional bias: gly residues.

It belongs to the universal ribosomal protein uL15 family. As to quaternary structure, part of the 50S ribosomal subunit.

In terms of biological role, binds to the 23S rRNA. The protein is Large ribosomal subunit protein uL15 of Paraburkholderia phytofirmans (strain DSM 17436 / LMG 22146 / PsJN) (Burkholderia phytofirmans).